Here is a 493-residue protein sequence, read N- to C-terminus: Cytoplasmic tRNA 2-thiolation protein 2 (493 aa).

Position 489 is a phosphoserine (S489).

Belongs to the CTU2/NCS2 family. In terms of assembly, interacts with NCS6 and URM1. May act by forming a heterodimer with NCS6.

Its subcellular location is the cytoplasm. It participates in tRNA modification; 5-methoxycarbonylmethyl-2-thiouridine-tRNA biosynthesis. Plays a central role in 2-thiolation of mcm(5)S(2)U at tRNA wobble positions of tRNA(Lys), tRNA(Glu) and tRNA(Gln). May act by forming a heterodimer with NCS6 that ligates sulfur from thiocarboxylated URM1 onto the uridine of tRNAs at wobble position. Prior mcm(5) tRNA modification by the elongator complex is required for 2-thiolation. May also be involved in protein urmylation. In Saccharomyces cerevisiae (strain AWRI1631) (Baker's yeast), this protein is Cytoplasmic tRNA 2-thiolation protein 2.